The following is a 394-amino-acid chain: Acetyl-CoA acetyltransferase (394 aa).

Cys88 serves as the catalytic Acyl-thioester intermediate. Active-site proton acceptor residues include His349 and Cys379.

Belongs to the thiolase-like superfamily. Thiolase family.

The protein localises to the cytoplasm. The catalysed reaction is 2 acetyl-CoA = acetoacetyl-CoA + CoA. It participates in metabolic intermediate biosynthesis; (R)-mevalonate biosynthesis; (R)-mevalonate from acetyl-CoA: step 1/3. This Escherichia coli (strain K12) protein is Acetyl-CoA acetyltransferase (atoB).